The primary structure comprises 370 residues: MKVTGITILFWPLSMILLSDKIQSSKREVQCNFTEKNYTLIPADIKKDVTILDLSYNQITLNGTDTRVLQTYFLLTELYLIENKVTILHNNGFGNLSSLEILNICRNSIYVIQQGAFLGLNKLKQLYLCQNKIEQLNADVFVPLRSLKLLNLQGNLISYLDVPPLFHLELITLYGNLWNCSCSLFNLQNWLNTSNVTLENENITMCSYPNSLQSYNIKTVPHKAECHSKFPSSVTEDLYIHFQPISNSIFNSSSNNLTRNSEHEPLGKSWAFLVGVVVTVLTTSLLIFIAIKCPIWYNILLSYNHHRLEEHEAETYEDGFTGNPSSLSQIPETNSEETTVIFEQLHSFVVDDDGFIEDKYIDIHELCEEN.

The signal sequence occupies residues 1–24; sequence MKVTGITILFWPLSMILLSDKIQS. Residues 25–270 lie on the Extracellular side of the membrane; that stretch reads SKREVQCNFT…SEHEPLGKSW (246 aa). N-linked (GlcNAc...) asparagine glycosylation is found at Asn-32, Asn-37, Asn-62, and Asn-95. LRR repeat units follow at residues 46–71, 72–95, 96–119, 120–143, and 145–168; these read KKDVTILDLSYNQITLNGTDTRVLQT, YFLLTELYLIENKVTILHNNGFGN, LSSLEILNICRNSIYVIQQGAFLG, LNKLKQLYLCQNKIEQLNADVFVP, and RSLKLLNLQGNLISYLDVPPLFHL. The 52-residue stretch at 176 to 227 folds into the LRRCT domain; it reads NLWNCSCSLFNLQNWLNTSNVTLENENITMCSYPNSLQSYNIKTVPHKAECH. Residues Asn-179, Asn-192, Asn-195, Asn-202, Asn-251, and Asn-256 are each glycosylated (N-linked (GlcNAc...) asparagine). A helical transmembrane segment spans residues 271–291; it reads AFLVGVVVTVLTTSLLIFIAI. The Cytoplasmic segment spans residues 292-370; the sequence is KCPIWYNILL…IDIHELCEEN (79 aa).

Interacts with TRAF2 and TRAF6. Expressed in renal collecting duct epithelial cells.

The protein resides in the membrane. Its activity is regulated as follows. Activated by TLR ligands such as LPS, bacterial DNA and peptidoglycan. Its function is as follows. Pathogen-recognition receptor which mediates the activation of TRAF2- and TRAF6 NF-kappa-B signaling pathways and induces the expression of pro-inflammatory cytokines. In kidney, prevents infection by uropathogenic bacteria by inducing the production of cytokines, chemokines and antimicrobial substances. In gut, involved in host-microbiota interactions, plays a critical role in promoting the recruitment of immune cells and intestinal inflammation. The protein is Leucine-rich repeat-containing protein 19 of Homo sapiens (Human).